A 244-amino-acid chain; its full sequence is tRNA (guanine-N(7)-)-methyltransferase (244 aa).

Over residues 1–10 (MSDTPQSPAQ) the composition is skewed to polar residues. Residues 1–20 (MSDTPQSPAQGSLAEHDEAR) are disordered. Positions 74, 99, 126, and 149 each coordinate S-adenosyl-L-methionine. D149 is a catalytic residue. Substrate is bound by residues K153, D185, and 222–225 (TKFE).

It belongs to the class I-like SAM-binding methyltransferase superfamily. TrmB family.

It catalyses the reaction guanosine(46) in tRNA + S-adenosyl-L-methionine = N(7)-methylguanosine(46) in tRNA + S-adenosyl-L-homocysteine. Its pathway is tRNA modification; N(7)-methylguanine-tRNA biosynthesis. In terms of biological role, catalyzes the formation of N(7)-methylguanine at position 46 (m7G46) in tRNA. This Pseudomonas aeruginosa (strain UCBPP-PA14) protein is tRNA (guanine-N(7)-)-methyltransferase.